The chain runs to 461 residues: MKAIILAAGLGTRFKSEKHKVLHEMLGKPIIWYVLNYIKQSNIVDIALVVSHKKESIIEALKHENVSFFEQANPKGGTADALLSAKAFFEGMDDYILVTNGDAPLVKPDTIKGMQRFLHMVEEYEKIKVGALVLSSFLPDPTGYGRIVKNGKGDVIKIVEEKEATYEQKQINEVNGGVYMFYVPYLKEAVKHLKPSEKTNELYITDIIEIMTNLGYTCRSFMASEITEIFGVNDRWELSFAESVIKMRILENLARSGVTIHSPESVYIEPDVQVELDAEIFPNVVLKGNTVIHKKAKVMNGSYLENATIKEKATVLPMSYIKNSTVEEEAIVGPMCHIRDNSVVGKGSHVGSFVELKNAKLQENVMAKHLSYLGDVNIGKKTNIGAGTVVANFDGKQKYQSYIGQKAFIGSNSLIIAPRNIGDFAFIAGGSVITKDIPPKALAIERAELKILEDKSKVKDE.

The interval 1–235 (MKAIILAAGL…ITEIFGVNDR (235 aa)) is pyrophosphorylase. Residues 6–9 (LAAG), K20, Q71, and 77–78 (GT) contribute to the UDP-N-acetyl-alpha-D-glucosamine site. D102 lines the Mg(2+) pocket. UDP-N-acetyl-alpha-D-glucosamine-binding residues include G145, E160, N175, and N233. Mg(2+) is bound at residue N233. The interval 236 to 256 (WELSFAESVIKMRILENLARS) is linker. The tract at residues 257-461 (GVTIHSPESV…LEDKSKVKDE (205 aa)) is N-acetyltransferase. UDP-N-acetyl-alpha-D-glucosamine-binding residues include R339 and K357. The Proton acceptor role is filled by H369. UDP-N-acetyl-alpha-D-glucosamine contacts are provided by Y372 and N383. Residues A386, S411, G429, and R446 each coordinate acetyl-CoA.

In the N-terminal section; belongs to the N-acetylglucosamine-1-phosphate uridyltransferase family. This sequence in the C-terminal section; belongs to the transferase hexapeptide repeat family. As to quaternary structure, homotrimer. It depends on Mg(2+) as a cofactor.

The protein localises to the cytoplasm. The catalysed reaction is alpha-D-glucosamine 1-phosphate + acetyl-CoA = N-acetyl-alpha-D-glucosamine 1-phosphate + CoA + H(+). It catalyses the reaction N-acetyl-alpha-D-glucosamine 1-phosphate + UTP + H(+) = UDP-N-acetyl-alpha-D-glucosamine + diphosphate. Its pathway is nucleotide-sugar biosynthesis; UDP-N-acetyl-alpha-D-glucosamine biosynthesis; N-acetyl-alpha-D-glucosamine 1-phosphate from alpha-D-glucosamine 6-phosphate (route II): step 2/2. It functions in the pathway nucleotide-sugar biosynthesis; UDP-N-acetyl-alpha-D-glucosamine biosynthesis; UDP-N-acetyl-alpha-D-glucosamine from N-acetyl-alpha-D-glucosamine 1-phosphate: step 1/1. It participates in bacterial outer membrane biogenesis; LPS lipid A biosynthesis. Functionally, catalyzes the last two sequential reactions in the de novo biosynthetic pathway for UDP-N-acetylglucosamine (UDP-GlcNAc). The C-terminal domain catalyzes the transfer of acetyl group from acetyl coenzyme A to glucosamine-1-phosphate (GlcN-1-P) to produce N-acetylglucosamine-1-phosphate (GlcNAc-1-P), which is converted into UDP-GlcNAc by the transfer of uridine 5-monophosphate (from uridine 5-triphosphate), a reaction catalyzed by the N-terminal domain. The protein is Bifunctional protein GlmU of Hydrogenobaculum sp. (strain Y04AAS1).